Here is a 3034-residue protein sequence, read N- to C-terminus: Cadherin EGF LAG seven-pass G-type receptor 1 (3034 aa).

The signal sequence occupies residues 1 to 29; that stretch reads MAPSSPRVLPALVLLAAAALPALELGAAA. Residues 30-2484 are Extracellular-facing; sequence WELRVPGGAR…REHGEVLPLK (2455 aa). Residues 222–243 show a composition bias toward low complexity; it reads GTPSESPSVSPSLLNLSQPRAG. The disordered stretch occupies residues 222-267; it reads GTPSESPSVSPSLLNLSQPRAGVVRRSRRGTGSSTSPQFPLPSYQV. The N-linked (GlcNAc...) asparagine glycan is linked to asparagine 236. Cadherin domains follow at residues 261 to 368, 369 to 474, 475 to 580, 581 to 702, 703 to 804, 805 to 907, 908 to 1014, 1015 to 1116, and 1121 to 1239; these read PLPS…SPVF, EQSE…YPQF, SEKR…APIF, VSSP…DPMF, TQPV…RPVF, QSSH…APRF, LRDF…PPVF, EKDE…PPEL, and ILFN…SPLL. Residues asparagine 561, asparagine 649, and asparagine 793 are each glycosylated (N-linked (GlcNAc...) asparagine). N-linked (GlcNAc...) asparagine glycosylation is found at asparagine 1129, asparagine 1154, asparagine 1228, asparagine 1264, asparagine 1274, and asparagine 1302. Residues 1318–1376 form the EGF-like 1; calcium-binding domain; the sequence is DDNICLREPCENYMKCVSVLRFDSSAPFISSTTVLFRPIHPITGLRCRCPPGFTGDYCE. Intrachain disulfides connect cysteine 1322–cysteine 1333, cysteine 1327–cysteine 1364, cysteine 1366–cysteine 1375, cysteine 1382–cysteine 1393, cysteine 1387–cysteine 1402, cysteine 1404–cysteine 1413, cysteine 1422–cysteine 1433, cysteine 1427–cysteine 1443, and cysteine 1445–cysteine 1455. Residues 1378 to 1414 form the EGF-like 2; calcium-binding domain; sequence EIDLCYSNPCGANGRCRSREGGYTCECFEDFTGEHCQ. Residues 1418–1456 enclose the EGF-like 3; calcium-binding domain; it reads RSGRCASGVCKNGGTCVNLLIGGFHCVCPPGEYEHPYCE. The Laminin G-like 1 domain occupies 1457-1661; sequence VSTRSFPPQS…IANNGTRAGC (205 aa). Asparagine 1591, asparagine 1638, and asparagine 1655 each carry an N-linked (GlcNAc...) asparagine glycan. 13 disulfides stabilise this stretch: cysteine 1635/cysteine 1661, cysteine 1668/cysteine 1679, cysteine 1673/cysteine 1688, cysteine 1690/cysteine 1699, cysteine 1855/cysteine 1885, cysteine 1891/cysteine 1902, cysteine 1896/cysteine 1911, cysteine 1913/cysteine 1922, cysteine 1926/cysteine 1937, cysteine 1931/cysteine 1949, cysteine 1951/cysteine 1960, cysteine 1968/cysteine 1981, and cysteine 1983/cysteine 1993. The EGF-like 4; calcium-binding domain maps to 1664–1700; sequence QRNFCDGTSCQNGGTCVNRWNTYLCECPLRFGGKNCE. Asparagine 1681 is subject to (3R)-3-hydroxyasparagine. Residues 1704-1885 enclose the Laminin G-like 2 domain; the sequence is PHPQRFTGES…ALKVRVKDGC (182 aa). Residues 1887 to 1922 form the EGF-like 5; calcium-binding domain; that stretch reads VEDPCASSPCPPHSHCRDTWDSYSCICDRGYFGKKC. Residue aspartate 1904 is modified to (3R)-3-hydroxyaspartate. An EGF-like 6; calcium-binding domain is found at 1923–1961; sequence VDACLLNPCKHVAACVRSPNTPRGYSCECGPGHYGQYCE. Positions 1962–1994 constitute an EGF-like 7; calcium-binding domain; the sequence is NKVDLPCPKGWWGNPVCGPCHCAVSQGFDPDCN. A glycan (N-linked (GlcNAc...) asparagine) is linked at asparagine 1994. In terms of domain architecture, EGF-like 8; calcium-binding spans 1996–2031; sequence TNGQCQCKENYYKPPAQDACLPCDCFPHGSHSRACD. Intrachain disulfides connect cysteine 2000–cysteine 2015, cysteine 2002–cysteine 2018, cysteine 2020–cysteine 2030, cysteine 2039–cysteine 2048, and cysteine 2051–cysteine 2063. Positions 2018 to 2065 constitute a Laminin EGF-like domain; sequence CDCFPHGSHSRACDMDTGQCACKPGVIGRQCNRCDNPFAEVTSLGCEV. Asparagine 2118, asparagine 2137, asparagine 2144, asparagine 2155, asparagine 2160, and asparagine 2272 each carry an N-linked (GlcNAc...) asparagine glycan. Residues 2295-2346 form a disordered region; the sequence is SVSFPADTFKPPEKKEGPVVRLTNRRTTPLTAQPEPRAERETSSSRRRRHPD. One can recognise a GAIN-B domain in the interval 2312 to 2476; sequence PVVRLTNRRT…AVLMDISRRE (165 aa). Intrachain disulfides connect cysteine 2426–cysteine 2458 and cysteine 2446–cysteine 2460. The GPS stretch occupies residues 2426–2476; the sequence is CVFWNHSLDTGGTGGWSAKGCELLSRNRTHVTCQCSHSASCAVLMDISRRE. N-linked (GlcNAc...) asparagine glycans are attached at residues asparagine 2430 and asparagine 2452. The chain crosses the membrane as a helical span at residues 2485 to 2505; sequence IITYAALSLSLVALLVAFVLL. Residues 2506-2516 lie on the Cytoplasmic side of the membrane; the sequence is SLVRTLRSNLH. Residues 2517-2537 form a helical membrane-spanning segment; it reads SIHKNLITALFFSQLIFMVGI. A glycan (N-linked (GlcNAc...) asparagine) is linked at asparagine 2538. Residues 2538–2542 lie on the Extracellular side of the membrane; it reads NQTEN. The chain crosses the membrane as a helical span at residues 2543–2563; the sequence is PFLCTVVAILLHYVSMGTFAW. The Cytoplasmic segment spans residues 2564–2587; sequence TLVENLHVYRMLTEVRNIDTGPMR. Residues 2588–2608 form a helical membrane-spanning segment; the sequence is FYHVVGWGIPAIVTGLAVGLD. Residues 2609–2625 lie on the Extracellular side of the membrane; it reads PQGYGNPDFCWLSLQDT. A helical transmembrane segment spans residues 2626–2646; that stretch reads LIWSFAGPVGTVIIINTVIFV. The Cytoplasmic segment spans residues 2647–2670; that stretch reads LSAKVSCQRKHHYYERKGVVSMLR. Residues 2671-2691 traverse the membrane as a helical segment; it reads TAFLLLLLVTATWLLGLLAVN. Residues 2692 to 2694 lie on the Extracellular side of the membrane; it reads SDT. Residues 2695-2715 form a helical membrane-spanning segment; sequence LSFHYLFAAFSCLQGIFVLLF. The Cytoplasmic portion of the chain corresponds to 2716-3034; it reads HCVAHREVRK…QANGSDSEKP (319 aa). Residues 2774 to 3034 form a disordered region; that stretch reads TASLDSTTRD…QANGSDSEKP (261 aa). Phosphoserine is present on residues serine 2776, serine 2779, serine 2886, and serine 2888. Residues 2893–2909 are compositionally biased toward basic and acidic residues; sequence TEPHLKVETKVSVELHR. A compositionally biased stretch (low complexity) spans 2976-2986; sequence SPTSSRTSSLG. A compositionally biased stretch (basic and acidic residues) spans 3003 to 3012; sequence PRREPGREHL. A compositionally biased stretch (polar residues) spans 3020 to 3034; that stretch reads RTGSAQANGSDSEKP.

It belongs to the G-protein coupled receptor 2 family. LN-TM7 subfamily. Post-translationally, the iron and 2-oxoglutarate dependent 3-hydroxylation of aspartate and asparagine is (R) stereospecific within EGF domains. In terms of tissue distribution, expressed in the brain, where it is localized principally in the ependymal cell layer, choroid plexus and the area postrema. Also found in spinal cord and in the eye.

It is found in the cell membrane. Its function is as follows. Receptor that may have an important role in cell/cell signaling during nervous system formation. The polypeptide is Cadherin EGF LAG seven-pass G-type receptor 1 (Celsr1) (Mus musculus (Mouse)).